A 237-amino-acid polypeptide reads, in one-letter code: UPF0502 protein RB6530 (237 aa).

The segment covering 187–202 (ASSAAPSQAESGSTSP) has biased composition (polar residues). The segment at 187 to 211 (ASSAAPSQAESGSTSPAKAANDDRI) is disordered.

Belongs to the UPF0502 family.

This is UPF0502 protein RB6530 from Rhodopirellula baltica (strain DSM 10527 / NCIMB 13988 / SH1).